The sequence spans 290 residues: Lipoyl synthase (290 aa).

Residues cysteine 38, cysteine 43, cysteine 49, cysteine 64, cysteine 68, cysteine 71, and serine 277 each coordinate [4Fe-4S] cluster. The 217-residue stretch at 50-266 (WSKGTATFLL…REIALDAGFR (217 aa)) folds into the Radical SAM core domain.

Belongs to the radical SAM superfamily. Lipoyl synthase family. Requires [4Fe-4S] cluster as cofactor.

Its subcellular location is the cytoplasm. It carries out the reaction [[Fe-S] cluster scaffold protein carrying a second [4Fe-4S](2+) cluster] + N(6)-octanoyl-L-lysyl-[protein] + 2 oxidized [2Fe-2S]-[ferredoxin] + 2 S-adenosyl-L-methionine + 4 H(+) = [[Fe-S] cluster scaffold protein] + N(6)-[(R)-dihydrolipoyl]-L-lysyl-[protein] + 4 Fe(3+) + 2 hydrogen sulfide + 2 5'-deoxyadenosine + 2 L-methionine + 2 reduced [2Fe-2S]-[ferredoxin]. Its pathway is protein modification; protein lipoylation via endogenous pathway; protein N(6)-(lipoyl)lysine from octanoyl-[acyl-carrier-protein]: step 2/2. Functionally, catalyzes the radical-mediated insertion of two sulfur atoms into the C-6 and C-8 positions of the octanoyl moiety bound to the lipoyl domains of lipoate-dependent enzymes, thereby converting the octanoylated domains into lipoylated derivatives. This chain is Lipoyl synthase, found in Chlorobaculum tepidum (strain ATCC 49652 / DSM 12025 / NBRC 103806 / TLS) (Chlorobium tepidum).